Consider the following 318-residue polypeptide: DNA repair nuclease/redox regulator APEX1 (318 aa).

The necessary for interaction with YBX1, binding to RNA, association together with NPM1 to rRNA, endoribonuclease activity on abasic RNA and localization in the nucleoli stretch occupies residues 1–33; the sequence is MPKRGKKGAVAEDGDELRTEPEAKKSKTAAKKN. A disordered region spans residues 1–60; it reads MPKRGKKGAVAEDGDELRTEPEAKKSKTAAKKNDKEAAGEGPALYEDPPDQKTSPSGKPA. N6-acetyllysine; by EP300 is present on residues K6 and K7. Positions 8–13 match the Nuclear localization signal (NLS) motif; the sequence is GAVAED. Positions 16-38 are enriched in basic and acidic residues; sequence ELRTEPEAKKSKTAAKKNDKEAA. The segment at 23 to 33 is necessary for interaction with NPM1 and for efficient rRNA binding; the sequence is AKKSKTAAKKN. N6-acetyllysine is present on residues K27, K31, K32, and K35. S54 is modified (phosphoserine). The Nuclear export signal (NES) motif lies at 64-80; the sequence is ICSWNVDGLRAWIKKKG. C65 is modified (S-nitrosocysteine; alternate). A disulfide bond links C65 and C93. Residue D70 participates in Mg(2+) binding. C93 bears the S-nitrosocysteine; alternate mark. E96 lines the Mg(2+) pocket. Y171 is an active-site residue. The residue at position 197 (K197) is an N6-acetyllysine. Residues D210 and N212 each coordinate Mg(2+). D210 acts as the Proton donor/acceptor in catalysis. Residue T233 is modified to Phosphothreonine; by CDK5. The mitochondrial targeting sequence (MTS) stretch occupies residues 289–318; it reads HSLLPALCDSKIRSKALGSDHCPITLYLAL. D308 contacts Mg(2+). Residue C310 is modified to S-nitrosocysteine.

It belongs to the DNA repair enzymes AP/ExoA family. As to quaternary structure, monomer. Homodimer; disulfide-linked. Component of the SET complex, composed of at least APEX1, SET, ANP32A, HMGB2, NME1 and TREX1. Associates with the dimer XRCC5/XRCC6 in a DNA-dependent manner. Interacts with SIRT1; the interaction is increased in the context of genotoxic stress. Interacts with HDAC1, HDAC2 and HDAC3; the interactions are not dependent on the APEX1 acetylation status. Interacts with XRCC1; the interaction is induced by SIRT1 and increased with the APEX1 acetylated form. Interacts with NPM1 (via N-terminal domain); the interaction is RNA-dependent and decreases in hydrogen peroxide-damaged cells. Interacts (via N-terminus) with YBX1 (via C-terminus); the interaction is increased in presence of APEX1 acetylated at Lys-6 and Lys-7. Interacts with HNRNPL; the interaction is DNA-dependent. Interacts (via N-terminus) with KPNA1 and KPNA2. Interacts with TXN; the interaction stimulates the FOS/JUN AP-1 complex DNA-binding activity in a redox-dependent manner. Interacts with GZMA, KRT8, MDM2, POLB, PRDX6, PRPF19, RPLP0, TOMM20 and WDR77. Binds to CDK5. It depends on Mg(2+) as a cofactor. Mn(2+) serves as cofactor. Phosphorylated. Phosphorylation by kinase PKC or casein kinase CK2 results in enhanced redox activity that stimulates binding of the FOS/JUN AP-1 complex to its cognate binding site. AP-endodeoxyribonuclease activity is not affected by CK2-mediated phosphorylation. Phosphorylation of Thr-233 by CDK5 in response to MPP(+)/MPTP (1-methyl-4-phenylpyridinium) reduces AP-endodeoxyribonuclease activity resulting in accumulation of DNA damage and contributing to neuronal death. In terms of processing, acetylated on Lys-6 and Lys-7. Acetylation is increased by the transcriptional coactivator EP300 acetyltransferase, genotoxic agents like H(2)O(2) and methyl methanesulfonate (MMS). Acetylation increases its binding affinity to the negative calcium response element (nCaRE) DNA promoter. The acetylated form induces a stronger binding of YBX1 to the Y-box sequence in the MDR1 promoter than the unacetylated form. Deacetylated on lysines. Lys-6 and Lys-7 are deacetylated by SIRT1. Post-translationally, cleaved at Lys-31 by granzyme A to create the mitochondrial form; leading in reduction of binding to DNA, AP endodeoxyribonuclease activity, redox activation of transcription factors and to enhanced cell death. Cleaved by granzyme K; leading to intracellular ROS accumulation and enhanced cell death after oxidative stress. Cys-69 and Cys-93 are nitrosylated in response to nitric oxide (NO) and lead to the exposure of the nuclear export signal (NES). In terms of processing, ubiquitinated by MDM2; leading to translocation to the cytoplasm and proteasomal degradation.

Its subcellular location is the nucleus. It localises to the nucleolus. It is found in the nucleus speckle. The protein resides in the endoplasmic reticulum. The protein localises to the cytoplasm. Its subcellular location is the mitochondrion. It catalyses the reaction a deoxyribonucleotide-2'-deoxyribose-5'-monophosphate-DNA + H2O = a 5'-end 2'-deoxyribose-5'-monophosphate-DNA + a 3'-end 2'-deoxyribonucleotide-DNA + H(+). It carries out the reaction Exonucleolytic cleavage in the 3'- to 5'-direction to yield nucleoside 5'-phosphates.. The enzyme catalyses a 3'-end 2'-deoxyribonucleotide-3'-phosphoglycolate-DNA + H2O = 2-phosphoglycolate + a 3'-end 2'-deoxyribonucleotide-DNA + H(+). The catalysed reaction is a 3'-end 2'-deoxyribonucleotide-8-oxoguanine-DNA + H2O = 8-oxo-dGMP + a 3'-end 2'-deoxyribonucleotide-DNA + H(+). Its activity is regulated as follows. NPM1 stimulates endodeoxyribonuclease activity on double-stranded DNA with AP sites, but inhibits endoribonuclease activity on single-stranded RNA containing AP sites. Its function is as follows. Multifunctional protein that plays a central role in the cellular response to oxidative stress. The two major activities of APEX1 are DNA repair and redox regulation of transcriptional factors. Functions as an apurinic/apyrimidinic (AP) endodeoxyribonuclease in the base excision repair (BER) pathway of DNA lesions induced by oxidative and alkylating agents. Initiates repair of AP sites in DNA by catalyzing hydrolytic incision of the phosphodiester backbone immediately adjacent to the damage, generating a single-strand break with 5'-deoxyribose phosphate and 3'-hydroxyl ends. Also incises at AP sites in the DNA strand of DNA/RNA hybrids, single-stranded DNA regions of R-loop structures, and single-stranded RNA molecules. Operates at switch sites of immunoglobulin (Ig) constant regions where it mediates Ig isotype class switch recombination. Processes AP sites induced by successive action of AICDA and UNG. Generates staggered nicks in opposite DNA strands resulting in the formation of double-strand DNA breaks that are finally resolved via non-homologous end joining repair pathway. Has 3'-5' exodeoxyribonuclease activity on mismatched deoxyribonucleotides at the 3' termini of nicked or gapped DNA molecules during short-patch BER. Possesses DNA 3' phosphodiesterase activity capable of removing lesions (such as phosphoglycolate and 8-oxoguanine) blocking the 3' side of DNA strand breaks. Also acts as an endoribonuclease involved in the control of single-stranded RNA metabolism. Plays a role in regulating MYC mRNA turnover by preferentially cleaving in between UA and CA dinucleotides of the MYC coding region determinant (CRD). In association with NMD1, plays a role in the rRNA quality control process during cell cycle progression. Acts as a loading factor for POLB onto non-incised AP sites in DNA and stimulates the 5'-terminal deoxyribose 5'-phosphate (dRp) excision activity of POLB. Exerts reversible nuclear redox activity to regulate DNA binding affinity and transcriptional activity of transcriptional factors by controlling the redox status of their DNA-binding domain, such as the FOS/JUN AP-1 complex after exposure to IR. Involved in calcium-dependent down-regulation of parathyroid hormone (PTH) expression by binding to negative calcium response elements (nCaREs). Together with HNRNPL or the dimer XRCC5/XRCC6, associates with nCaRE, acting as an activator of transcriptional repression. May also play a role in the epigenetic regulation of gene expression by participating in DNA demethylation. Stimulates the YBX1-mediated MDR1 promoter activity, when acetylated at Lys-6 and Lys-7, leading to drug resistance. Plays a role in protection from granzyme-mediated cellular repair leading to cell death. Binds DNA and RNA. Associates, together with YBX1, on the MDR1 promoter. Together with NPM1, associates with rRNA. The sequence is that of DNA repair nuclease/redox regulator APEX1 (APEX1) from Pan paniscus (Pygmy chimpanzee).